We begin with the raw amino-acid sequence, 74 residues long: EMBRYO SURROUNDING FACTOR 1-like protein 4 (74 aa).

The first 22 residues, Met1 to Cys22, serve as a signal peptide directing secretion. 4 disulfides stabilise this stretch: Cys36–Cys51, Cys41–Cys70, Cys49–Cys66, and Cys52–Cys59.

This sequence belongs to the MEG family. As to expression, expressed in flowers.

This is EMBRYO SURROUNDING FACTOR 1-like protein 4 (ESFL4) from Arabidopsis thaliana (Mouse-ear cress).